A 205-amino-acid chain; its full sequence is Holliday junction branch migration complex subunit RuvA (205 aa).

Residues 1-65 are domain I; sequence MIAKLKGILD…EDRIHLFGFL (65 aa). The segment at 66-144 is domain II; the sequence is DNTEKVAFNM…NINTIANNTS (79 aa). The interval 145 to 153 is flexible linker; the sequence is LATLSTDSN. Positions 154 to 205 are domain III; the sequence is THDNILSDAITALIALGISRAEATQILSDIYALSPSISVNELVRTALQRRAK.

This sequence belongs to the RuvA family. In terms of assembly, homotetramer. Forms an RuvA(8)-RuvB(12)-Holliday junction (HJ) complex. HJ DNA is sandwiched between 2 RuvA tetramers; dsDNA enters through RuvA and exits via RuvB. An RuvB hexamer assembles on each DNA strand where it exits the tetramer. Each RuvB hexamer is contacted by two RuvA subunits (via domain III) on 2 adjacent RuvB subunits; this complex drives branch migration. In the full resolvosome a probable DNA-RuvA(4)-RuvB(12)-RuvC(2) complex forms which resolves the HJ.

The protein resides in the cytoplasm. Functionally, the RuvA-RuvB-RuvC complex processes Holliday junction (HJ) DNA during genetic recombination and DNA repair, while the RuvA-RuvB complex plays an important role in the rescue of blocked DNA replication forks via replication fork reversal (RFR). RuvA specifically binds to HJ cruciform DNA, conferring on it an open structure. The RuvB hexamer acts as an ATP-dependent pump, pulling dsDNA into and through the RuvAB complex. HJ branch migration allows RuvC to scan DNA until it finds its consensus sequence, where it cleaves and resolves the cruciform DNA. The protein is Holliday junction branch migration complex subunit RuvA of Orientia tsutsugamushi (strain Ikeda) (Rickettsia tsutsugamushi).